The sequence spans 820 residues: Protein bicaudal D homolog 2 (820 aa).

Ser-2 bears the N-acetylserine mark. A coiled-coil region spans residues 20 to 270 (EWLRAEVKRL…LSHYMSINDS (251 aa)). Residues 25-400 (EVKRLSHELA…RLTENLSALR (376 aa)) are interaction with DYNLL1, DYNC1H1, DYNC1I2, DCTN1 and DCTN2. A phosphoserine mark is found at Ser-190, Ser-224, and Ser-320. A disordered region spans residues 313 to 332 (SSLDNKTSTPRKDGLAPPSP). The residue at position 321 (Thr-321) is a Phosphothreonine. Residues 336–595 (SDLLSELHIS…LLATEVGRAD (260 aa)) form an interaction with KIF5A region. Residues 340-539 (SELHISEIQK…VTFSEELANL (200 aa)) adopt a coiled-coil conformation. Ser-345 and Ser-397 each carry phosphoserine. 4 disordered regions span residues 400–427 (RRLQ…GDYY), 563–582 (QGKA…PVLL), 591–618 (VGRA…DPRR), and 799–820 (HEQT…SPSL). Positions 404 to 424 (AGKERQTSLDNEKDRDSHEDG) are enriched in basic and acidic residues. 2 positions are modified to phosphoserine: Ser-570 and Ser-578. Residues 586–820 (LLATEVGRAD…SKAKPASPSL (235 aa)) form an interaction with RANBP2 region. A Phosphothreonine modification is found at Thr-598. The span at 602–614 (SPSPSSSLPSPLS) shows a compositional bias: low complexity. Residues 662–804 (DKDKEALMEE…LELDHEQTRR (143 aa)) adopt a coiled-coil conformation. Residues 662–810 (DKDKEALMEE…QTRRGRSKAA (149 aa)) form an interaction with RAB6A region. Residue Ser-819 is modified to Phosphoserine.

This sequence belongs to the BicD family. Part of a tripartite complex with dynein and dynactin, acts an adapter linking the dynein motor complex and dynactin. Interacts with CPNE4 (via VWFA domain). Interacts with NEK9. Interacts with DCTN2. Interacts with RAB6A. Interacts with DNAI1. Interacts with DYNLL1, DYNC1H1, DYNC1I2 and DCTN1. Forms a complex with dynein and dynactin. The dynein-dynactin-BICD2 ternary complex (DDB) binds preferentially to tyrosinated microtubules than to detyrosinated microtubules. Interacts with RANBP2, RAB6A and KIF5A. Interacts with KIF1C. In terms of processing, phosphorylated by NEK9 in vitro. As to expression, ubiquitously expressed with high expression in the spinal cord.

Its subcellular location is the golgi apparatus. The protein resides in the cytoplasm. It is found in the cytoskeleton. The protein localises to the nucleus. It localises to the nuclear pore complex. Its subcellular location is the nucleus envelope. In terms of biological role, acts as an adapter protein linking the dynein motor complex to various cargos and converts dynein from a non-processive to a highly processive motor in the presence of dynactin. Facilitates and stabilizes the interaction between dynein and dynactin and activates dynein processivity (the ability to move along a microtubule for a long distance without falling off the track). Facilitates the binding of RAB6A to the Golgi by stabilizing its GTP-bound form. Regulates coat complex coatomer protein I (COPI)-independent Golgi-endoplasmic reticulum transport via its interaction with RAB6A and recruitment of the dynein-dynactin motor complex. Contributes to nuclear and centrosomal positioning prior to mitotic entry through regulation of both dynein and kinesin-1. During G2 phase of the cell cycle, associates with RANBP2 at the nuclear pores and recruits dynein and dynactin to the nuclear envelope to ensure proper positioning of the nucleus relative to centrosomes prior to the onset of mitosis. The polypeptide is Protein bicaudal D homolog 2 (Bicd2) (Mus musculus (Mouse)).